A 628-amino-acid chain; its full sequence is uncharacterized protein (628 aa).

2 disordered regions span residues 1-65 and 80-125; these read MDTN…ISSA and SLRN…VSLS. The span at 12–21 shows a compositional bias: low complexity; sequence ISPSIASSFP. A compositionally biased stretch (polar residues) spans 25 to 37; sequence PFSSQNSTTSNPE. 2 stretches are compositionally biased toward low complexity: residues 48-64 and 87-102; these read SSII…NISS and SPHI…SSSS. Over residues 103–116 the composition is skewed to basic and acidic residues; that stretch reads DLDKSMLDEKHPDS. Helical transmembrane passes span 157 to 177, 203 to 223, 230 to 250, 259 to 279, 294 to 314, 324 to 344, 417 to 437, 454 to 474, 483 to 503, 511 to 531, 542 to 562, and 583 to 603; these read IITC…SISL, VGTG…NLLM, LWLS…AVLG, FIAL…GFAF, IGWY…LSAA, LYGY…QGLF, LWPP…LVNY, VSLL…TVLP, MLFF…TTFV, VGLL…MTWV, VGVA…SVVA, and MCGM…VQKF.

The protein belongs to the major facilitator superfamily. Allantoate permease family.

It localises to the membrane. This is an uncharacterized protein from Schizosaccharomyces pombe (strain 972 / ATCC 24843) (Fission yeast).